Consider the following 396-residue polypeptide: OTU domain-containing protein 3 (396 aa).

The tract at residues 1–49 (MSRKQAAKSRPGSGGRRAEAERKRDERAARRALAKERRNRPDPGGSGCE) is disordered. A compositionally biased stretch (basic and acidic residues) spans 16 to 41 (RRAEAERKRDERAARRALAKERRNRP). The OTU domain maps to 64 to 188 (LKLREVPGDG…GEHYDSVRRI (125 aa)). Position 65 is an N6-acetyllysine (Lys65). The interval 69-75 (VPGDGNC) is cys-loop. Asp72 is an active-site residue. The active-site Nucleophile is Cys75. Lys121 and Lys128 each carry N6-acetyllysine. The variable-loop stretch occupies residues 126–136 (LSKPGTFAGND). The tract at residues 176–181 (YRYGEH) is his-loop. His181 is a catalytic residue. Residue Lys219 is modified to N6-acetyllysine. In terms of domain architecture, UBA-like spans 229-269 (DDVEDAVHKVGSATGCTDFNLIVQNLEAENYNIKSAITALL). Residues 275–381 (TGNDAEENHE…RDTGRSEADM (107 aa)) are disordered. 3 stretches are compositionally biased toward basic and acidic residues: residues 280–301 (EENH…EAGS), 312–331 (NEGR…ESKA), and 343–379 (QRRE…RSEA). An N6-acetyllysine modification is found at Lys290.

Post-translationally, glucose and fatty acids stimulate CREBBP-dependent acetylation, promoting its nuclear translocation.

It localises to the cytoplasm. It is found in the nucleus. The catalysed reaction is Thiol-dependent hydrolysis of ester, thioester, amide, peptide and isopeptide bonds formed by the C-terminal Gly of ubiquitin (a 76-residue protein attached to proteins as an intracellular targeting signal).. In terms of biological role, deubiquitinating enzyme that hydrolyzes 'Lys-6'- and 'Lys-11'-linked polyubiquitin. Also hydrolyzes heterotypic (mixed and branched) and homotypic chains. Important regulator of energy metabolism. Glucose and fatty acids trigger its nuclear translocation by CBP-dependent acetylation. In the nucleus, deubiquitinates and stabilizes the nuclear receptor PPARD regulating the expression of various genes involved in glucose and lipid metabolism and oxidative phosphorylation. Also acts as a negative regulator of the ribosome quality control (RQC) by mediating deubiquitination of 40S ribosomal proteins RPS10/eS10 and RPS20/uS10, thereby antagonizing ZNF598-mediated 40S ubiquitination. This chain is OTU domain-containing protein 3 (Otud3), found in Mus musculus (Mouse).